A 559-amino-acid chain; its full sequence is uncharacterized protein (559 aa).

The next 11 helical transmembrane spans lie at 103–123 (LAALIAGNVFIAMPMTLNGLF), 139–159 (FGYYFNTLIILLRFIAGLFYY), 192–212 (AGITSDFLISYFVYWVISFPF), 223–243 (FFLIKSISTYIACFAMLIFLL), 263–283 (WSWVFMCALNSSVAGFSTLAV), 302–322 (MLILPLVAAVSAPIGIVSGVA), 348–368 (AAAFFMGLTYLVSMIAQNISD), 387–407 (IRRAQVIVIIIGAWAIVPWKI), 413–434 (AFLAFLGSLSIFLGPAAGIFVA), 466–486 (ALIAFLCACVPLIPGMAMSIN), and 501–521 (IGYFYSFMTAFLIYWGLNLVF).

The protein belongs to the purine-cytosine permease (2.A.39) family.

Its subcellular location is the golgi apparatus membrane. This is an uncharacterized protein from Schizosaccharomyces pombe (strain 972 / ATCC 24843) (Fission yeast).